We begin with the raw amino-acid sequence, 435 residues long: Methylenetetrahydrofolate--tRNA-(uracil-5-)-methyltransferase TrmFO (435 aa).

9 to 14 (GAGLAG) provides a ligand contact to FAD.

Belongs to the MnmG family. TrmFO subfamily. FAD is required as a cofactor.

The protein localises to the cytoplasm. It catalyses the reaction uridine(54) in tRNA + (6R)-5,10-methylene-5,6,7,8-tetrahydrofolate + NADH + H(+) = 5-methyluridine(54) in tRNA + (6S)-5,6,7,8-tetrahydrofolate + NAD(+). The enzyme catalyses uridine(54) in tRNA + (6R)-5,10-methylene-5,6,7,8-tetrahydrofolate + NADPH + H(+) = 5-methyluridine(54) in tRNA + (6S)-5,6,7,8-tetrahydrofolate + NADP(+). Catalyzes the folate-dependent formation of 5-methyl-uridine at position 54 (M-5-U54) in all tRNAs. This chain is Methylenetetrahydrofolate--tRNA-(uracil-5-)-methyltransferase TrmFO, found in Staphylococcus epidermidis (strain ATCC 35984 / DSM 28319 / BCRC 17069 / CCUG 31568 / BM 3577 / RP62A).